Reading from the N-terminus, the 430-residue chain is Glutamate-1-semialdehyde 2,1-aminomutase (430 aa).

K265 bears the N6-(pyridoxal phosphate)lysine mark.

The protein belongs to the class-III pyridoxal-phosphate-dependent aminotransferase family. HemL subfamily. Homodimer. The cofactor is pyridoxal 5'-phosphate.

The protein resides in the cytoplasm. It catalyses the reaction (S)-4-amino-5-oxopentanoate = 5-aminolevulinate. Its pathway is porphyrin-containing compound metabolism; protoporphyrin-IX biosynthesis; 5-aminolevulinate from L-glutamyl-tRNA(Glu): step 2/2. This Shewanella putrefaciens (strain CN-32 / ATCC BAA-453) protein is Glutamate-1-semialdehyde 2,1-aminomutase.